The sequence spans 394 residues: Protein TsgA homolog (394 aa).

Helical transmembrane passes span 11–31 (WISY…GMVM), 51–71 (FLNA…EIIP), 76–96 (LVFG…GHNL), 101–121 (ISMF…TFLI), 134–154 (LLFT…AAAI), 162–182 (WYWV…LTLC), 206–226 (MGVL…LGFI), 246–266 (QLVS…SFIL), 274–294 (IVTV…STNN), 302–322 (ILAL…LGSL), 334–354 (FILT…GPIV), and 363–383 (LATA…LGFF).

Belongs to the major facilitator superfamily. TsgA family.

The protein localises to the cell inner membrane. This chain is Protein TsgA homolog, found in Yersinia enterocolitica serotype O:8 / biotype 1B (strain NCTC 13174 / 8081).